Here is a 476-residue protein sequence, read N- to C-terminus: Calcium uptake protein 1, mitochondrial (476 aa).

A mitochondrion-targeting transit peptide spans 1–33 (MFRLNSLSALAELAVGSRWYHGGSQPIQIRRRL). The interval 68–106 (SDIGDKGKNKDEGDVCNHEKKTADLAPHPEEKKKKRSGF) is disordered. A polybasic region region spans residues 99-110 (KKKKRSGFRDRK). A Phosphoserine modification is found at Ser122. The interval 126-129 (KIFR) is k/R-ring. In terms of domain architecture, EF-hand 1 spans 218–253 (TPQRNFEIAFKMFDLNGDGEVDMEEFEQVQSIIRSQ). Positions 231, 233, 235, 237, and 242 each coordinate Ca(2+). Residues 259–263 (RHRDR) form a k/R-ring region. In terms of domain architecture, EF-hand 2 spans 408 to 443 (LSDHVCDVVFALFDCDGNGELSNKEFVSIMKQRLMR). The Ca(2+) site is built by Asp421, Asp423, Asn425, Glu427, and Glu432. Arg455 is modified (asymmetric dimethylarginine). The interval 455 to 465 (RLMQAMWKCAQ) is C-helix region.

This sequence belongs to the MICU1 family. MICU1 subfamily. As to quaternary structure, heterodimer; disulfide-linked; heterodimerizes with MICU2 or MICU3. Homodimer; disulfide-linked. Component of the uniplex complex, composed of MCU, EMRE/SMDT1, MICU1 and MICU2 (or MICU3) in a 4:4:1:1 stoichiometry. The composition of calcium sensors within the uniplex complex can differ depending on tissues: a MICU1 homodimer can be present instead of the MICU1-MICU2 heterodimer in skeletal-muscle and kidney. MICU1 is recruited to the uniplex complex by EMRE/SMDT1, and it associates with MCU at low calcium levels, occluding the pore of the MCU channel. Associates with the MICOS complex. Interacts with SLC25A23. Interacts with CHCHD4/MIA40; which introduces the interchain disulfide bond with MICU2. Interacts (when methylated) with UCP2; leading to decrease the calcium sensitivity of MICU1. Phosphorylation at Ser-122 by AKT1 impairs its maturation and stability. Post-translationally, asymmetric dimethylation at Arg-455 by PRMT1 decreases the calcium sensitivity of MICU1 by promoting interaction with UCP2. In terms of processing, degraded by YME1L1 when not complexed as homodimer or heterodimer. Not degraded when complexed as homodimer or heterodimer; the presence of the interchain disulfide bond protecting MICU1 from degradation by YME1L1. As to expression, expressed in epithelial cell lines. Strongly expressed in epidermal keratinocytes and dermal endothelial cells.

It is found in the mitochondrion intermembrane space. Its subcellular location is the mitochondrion inner membrane. With respect to regulation, activated by spermine, kaempferol and SB202190, which bind MICU1 and prevent MCU pore occlusion in absence of calcium. Functionally, calcium sensor of the mitochondrial calcium uniporter (MCU) channel, which senses calcium level via its EF-hand domains. MICU1 and MICU2 (or MICU3) form a disulfide-linked heterodimer that stimulates and inhibits MCU activity, depending on the concentration of calcium. At low calcium levels, MICU1 occludes the pore of the MCU channel, preventing mitochondrial calcium uptake. At higher calcium levels, calcium-binding to MICU1 and MICU2 (or MICU3) induces a conformational change that weakens MCU-MICU1 interactions and moves the MICU1-MICU2 heterodimer away from the pore, allowing calcium permeation through the MCU channel. Also required to protect against manganese toxicity by preventing manganese uptake by MCU: mechanistically, manganese-binding to its EF-hand domains does not induce any conformational change, maintaining MCU pore occlusion. Also acts as a barrier for inhibitors of the MCU channel, such as ruthenium red or its derivative Ru360. Acts as a regulator of mitochondrial cristae structure independently of its ability to regulate the mitochondrial calcium uniporter channel. Regulates glucose-dependent insulin secretion in pancreatic beta-cells by regulating mitochondrial calcium uptake. Induces T-helper 1-mediated autoreactivity, which is accompanied by the release of IFNG. In terms of biological role, isoform that regulates mitochondrial calcium uniporter (MCU) in the skeletal muscle. Compared to other isoforms, this isoform has higher affinity for calcium, promoting mitochondrial calcium uptake at lower calcium concentrations. This allows a rapid response of mitochondrial metabolism and ensures sustained ATP production needed for resistance and strenuous exercise. The sequence is that of Calcium uptake protein 1, mitochondrial from Homo sapiens (Human).